A 580-amino-acid polypeptide reads, in one-letter code: DNA mismatch repair protein MutL (580 aa).

Belongs to the DNA mismatch repair MutL/HexB family.

This protein is involved in the repair of mismatches in DNA. It is required for dam-dependent methyl-directed DNA mismatch repair. May act as a 'molecular matchmaker', a protein that promotes the formation of a stable complex between two or more DNA-binding proteins in an ATP-dependent manner without itself being part of a final effector complex. The sequence is that of DNA mismatch repair protein MutL from Chlamydia felis (strain Fe/C-56) (Chlamydophila felis).